A 200-amino-acid chain; its full sequence is Imidazole glycerol phosphate synthase subunit HisH (200 aa).

One can recognise a Glutamine amidotransferase type-1 domain in the interval 3–200 (DLALIDAGGA…LRNFLEMSFP (198 aa)). Cys-78 serves as the catalytic Nucleophile. Catalysis depends on residues His-179 and Glu-181.

As to quaternary structure, heterodimer of HisH and HisF.

Its subcellular location is the cytoplasm. It carries out the reaction 5-[(5-phospho-1-deoxy-D-ribulos-1-ylimino)methylamino]-1-(5-phospho-beta-D-ribosyl)imidazole-4-carboxamide + L-glutamine = D-erythro-1-(imidazol-4-yl)glycerol 3-phosphate + 5-amino-1-(5-phospho-beta-D-ribosyl)imidazole-4-carboxamide + L-glutamate + H(+). It catalyses the reaction L-glutamine + H2O = L-glutamate + NH4(+). The protein operates within amino-acid biosynthesis; L-histidine biosynthesis; L-histidine from 5-phospho-alpha-D-ribose 1-diphosphate: step 5/9. In terms of biological role, IGPS catalyzes the conversion of PRFAR and glutamine to IGP, AICAR and glutamate. The HisH subunit catalyzes the hydrolysis of glutamine to glutamate and ammonia as part of the synthesis of IGP and AICAR. The resulting ammonia molecule is channeled to the active site of HisF. In Xanthomonas campestris pv. campestris (strain 8004), this protein is Imidazole glycerol phosphate synthase subunit HisH.